We begin with the raw amino-acid sequence, 127 residues long: Aspartate 1-decarboxylase (127 aa).

Ser-25 acts as the Schiff-base intermediate with substrate; via pyruvic acid in catalysis. At Ser-25 the chain carries Pyruvic acid (Ser). Thr-57 contributes to the substrate binding site. Tyr-58 acts as the Proton donor in catalysis. A substrate-binding site is contributed by 73-75 (GAA).

It belongs to the PanD family. As to quaternary structure, heterooctamer of four alpha and four beta subunits. It depends on pyruvate as a cofactor. In terms of processing, is synthesized initially as an inactive proenzyme, which is activated by self-cleavage at a specific serine bond to produce a beta-subunit with a hydroxyl group at its C-terminus and an alpha-subunit with a pyruvoyl group at its N-terminus.

It is found in the cytoplasm. It carries out the reaction L-aspartate + H(+) = beta-alanine + CO2. It participates in cofactor biosynthesis; (R)-pantothenate biosynthesis; beta-alanine from L-aspartate: step 1/1. Catalyzes the pyruvoyl-dependent decarboxylation of aspartate to produce beta-alanine. The chain is Aspartate 1-decarboxylase from Bacillus subtilis (strain 168).